A 224-amino-acid chain; its full sequence is Synaptogyrin-2 (224 aa).

At Met-1 the chain carries N-acetylmethionine. Phosphoserine is present on Ser-3. Residues 20-171 enclose the MARVEL domain; that stretch reads YVSQPQVVTR…LASLAYQRYK (152 aa). The next 4 helical transmembrane spans lie at 30-50, 73-93, 105-125, and 147-167; these read LVSM…GYIN, AIGV…AFFS, VIGD…GFCF, and AAIT…SLAY.

It belongs to the synaptogyrin family. May be tyrosine phosphorylated by Src. As to expression, ubiquitously expressed with lower expression in brain (at protein level).

Its subcellular location is the cytoplasmic vesicle membrane. The protein resides in the cytoplasmic vesicle. It localises to the secretory vesicle. It is found in the synaptic vesicle membrane. Functionally, may play a role in regulated exocytosis. In neuronal cells, modulates the localization of synaptophysin/SYP into synaptic-like microvesicles and may therefore play a role in the formation and/or the maturation of this vesicles. May also play a role in GLUT4 storage and transport to the plasma membrane. The polypeptide is Synaptogyrin-2 (Rattus norvegicus (Rat)).